Consider the following 126-residue polypeptide: Bactofilin BacO (126 aa).

This sequence belongs to the bactofilin family. In terms of assembly, interacts with BacN and probably also BacP, the 3 proteins colocalize as an extended structure. Interacts with PadC.

It is found in the cytoplasm. Its subcellular location is the cytoskeleton. Its function is as follows. A non-essential component of the chromosome segregation machinery. Positions the ParA-ParB-parS chromosome segregation machinery within the cell; BacP seems to be the most important bactofilin in this process. Forms a heteropolymeric, subpolar scaffold in the cell; BacP probably forms the core, BacO contributes to position and integrity while BacN does not seem to contribute to assembly. In Myxococcus xanthus (strain DK1622), this protein is Bactofilin BacO.